We begin with the raw amino-acid sequence, 513 residues long: 2-isopropylmalate synthase (513 aa).

The 265-residue stretch at 4-268 (IKIFDTTLRD…ETGIKTELIY (265 aa)) folds into the Pyruvate carboxyltransferase domain. Mn(2+) is bound by residues aspartate 13, histidine 203, histidine 205, and asparagine 239. The regulatory domain stretch occupies residues 392 to 513 (KLVHFHVHTG…GLLRKNGGAE (122 aa)).

This sequence belongs to the alpha-IPM synthase/homocitrate synthase family. LeuA type 1 subfamily. Homodimer. Requires Mn(2+) as cofactor.

It is found in the cytoplasm. It carries out the reaction 3-methyl-2-oxobutanoate + acetyl-CoA + H2O = (2S)-2-isopropylmalate + CoA + H(+). The protein operates within amino-acid biosynthesis; L-leucine biosynthesis; L-leucine from 3-methyl-2-oxobutanoate: step 1/4. In terms of biological role, catalyzes the condensation of the acetyl group of acetyl-CoA with 3-methyl-2-oxobutanoate (2-ketoisovalerate) to form 3-carboxy-3-hydroxy-4-methylpentanoate (2-isopropylmalate). In Thermotoga petrophila (strain ATCC BAA-488 / DSM 13995 / JCM 10881 / RKU-1), this protein is 2-isopropylmalate synthase.